The sequence spans 397 residues: tRNA (guanine-N(7)-)-methyltransferase non-catalytic subunit wuho (397 aa).

WD repeat units lie at residues 75–115 (KVEV…AQLL), 163–202 (GHLSIVYDVLWSEDQQYIITCDRDDKIRVTNYPATFDIHS), 206–244 (GHKEFVSGLAMLTEQHIISASGDKTLRVWNYTCGKELLL), and 303–343 (AGTW…RASG).

Belongs to the WD repeat TRM82 family. Forms a heterodimer with the catalytic subunit Mettl1. Interacts with mei-P26 and weakly interacts with bgcn; required for the function or formation of the mei-P26-bgcn-bam-sxl complex. Interacts with nanos; may be involved in mei-P26-dependent derepression of the BMP signaling pathway. Interacts with Myc; the interaction may be mediated by mei-P26 and may be involved in the regulation of ribosome biogenesis. In testis, it is present at high level in hub cells, a niche for germline stem cells of testis. Ubiquitously expressed in all testicular cells throughout spermatogenesis. Ubiquitously expressed in all germline and somatic cells of the ovary.

The protein localises to the nucleus. It localises to the cytoplasm. It participates in tRNA modification; N(7)-methylguanine-tRNA biosynthesis. Its function is as follows. Required for the Mettl1-dependent formation of N(7)-methylguanine at position 46 (m7G46) in tRNA. In the Mettl1-wuho methyltransferase complex, it is required to stabilize and induce conformational changes of the catalytic subunit. Required for binding of nanos mRNA and repression of translation by the mei-P26-bgcn-bam-sxl complex. May cooperate with mei-P26 and nanos to derepress the BMP signaling pathway. May cooperate with mei-P26 to suppress expression of a subset of microRNAs. May cooperate with mei-P26 to regulate bam expression levels in germline cells during gametogenesis. Required to promote mitosis to meiosis transition during gametogenesis. May regulate germline cell division in part by regulating ribosome biogenesis. The polypeptide is tRNA (guanine-N(7)-)-methyltransferase non-catalytic subunit wuho (Drosophila persimilis (Fruit fly)).